Here is a 179-residue protein sequence, read N- to C-terminus: Large ribosomal subunit protein uL6 (179 aa).

This sequence belongs to the universal ribosomal protein uL6 family. Part of the 50S ribosomal subunit.

This protein binds to the 23S rRNA, and is important in its secondary structure. It is located near the subunit interface in the base of the L7/L12 stalk, and near the tRNA binding site of the peptidyltransferase center. The polypeptide is Large ribosomal subunit protein uL6 (Syntrophotalea carbinolica (strain DSM 2380 / NBRC 103641 / GraBd1) (Pelobacter carbinolicus)).